Here is a 269-residue protein sequence, read N- to C-terminus: MFPENKMLLIAGPCVIEDNSVFETARRLKEIVAPYASSVHWIFKSSYDKANRSSVHNYRGPGLRLGLQTLAKIKEELDVEILTDVHSPDEAREAAKVCDIIQVPAFLCRQTDLLVTAGETQAIVNIKKGQFLSPWEMQGPIDKVLSTGNNKIILTERGCSFGYNNLVSDMRSIEVLRRFGFPVVFDGTHSVQLPGALHSQSGGQTEFIPVLTRSAIAAGVQGLFIETHPNPSSALSDAASMLSLKDLERLLPAWVQLFTYIQEMDAVSV.

This sequence belongs to the KdsA family.

Its subcellular location is the cytoplasm. It catalyses the reaction D-arabinose 5-phosphate + phosphoenolpyruvate + H2O = 3-deoxy-alpha-D-manno-2-octulosonate-8-phosphate + phosphate. It functions in the pathway carbohydrate biosynthesis; 3-deoxy-D-manno-octulosonate biosynthesis; 3-deoxy-D-manno-octulosonate from D-ribulose 5-phosphate: step 2/3. The protein operates within bacterial outer membrane biogenesis; lipopolysaccharide biosynthesis. This Chlamydia trachomatis serovar L2 (strain ATCC VR-902B / DSM 19102 / 434/Bu) protein is 2-dehydro-3-deoxyphosphooctonate aldolase.